Here is a 296-residue protein sequence, read N- to C-terminus: Acetylglutamate kinase (296 aa).

Substrate-binding positions include 67-68 (GG), arginine 89, and asparagine 194.

The protein belongs to the acetylglutamate kinase family. ArgB subfamily.

The protein resides in the cytoplasm. The enzyme catalyses N-acetyl-L-glutamate + ATP = N-acetyl-L-glutamyl 5-phosphate + ADP. Its pathway is amino-acid biosynthesis; L-arginine biosynthesis; N(2)-acetyl-L-ornithine from L-glutamate: step 2/4. Functionally, catalyzes the ATP-dependent phosphorylation of N-acetyl-L-glutamate. This chain is Acetylglutamate kinase, found in Brucella canis (strain ATCC 23365 / NCTC 10854 / RM-666).